A 257-amino-acid polypeptide reads, in one-letter code: Nuclear receptor subfamily 0 group B member 2 (257 aa).

An NR LBD domain is found at 16 to 257 (SRPAILYALL…GLLGDMLLLR (242 aa)). Arg-57 is subject to Symmetric dimethylarginine; by PRMT5.

Belongs to the nuclear hormone receptor family. NR0 subfamily. In terms of assembly, interacts (via N-terminus) with NEUROD1 (via N-terminus and C-terminus). Interacts with ID2. Interacts with RORG, NFIL3, NR1D1 and BHLHE41. Heterodimer; efficient DNA binding requires dimerization with another bHLH protein. Interacts with RARA, RXRA, THRB, NR5A1, NR5A2, NR1I3, PPARA, PPARG and EID1. Interacts with HNF4A; the resulting heterodimer is transcriptionally inactive. Interacts with DDX3X; this interaction disrupts the interaction between HNF4 and NR0B2/SHP that forms inactive heterodimers and enhances the formation of active HNF4 homodimers. Arginine methylation by PRMT5 enhances repression activity of metabolic genes in liver in response to bile acid signaling, by increasing interaction with cofactors. As to expression, liver. Low levels of expression were detected in heart and pancreas.

The protein resides in the nucleus. The protein localises to the cytoplasm. Transcriptional regulator that acts as a negative regulator of receptor-dependent signaling pathways. Specifically inhibits transactivation of the nuclear receptor with which it interacts. Inhibits transcriptional activity of NEUROD1 on E-box-containing promoter by interfering with the coactivation function of the p300/CBP-mediated transcription complex for NEUROD1. Essential component of the liver circadian clock which via its interaction with NR1D1 and RORG regulates NPAS2-mediated hepatic lipid metabolism. Regulates the circadian expression of cytochrome P450 (CYP) enzymes. Represses: NR5A2 and HNF4A to down-regulate CYP2C38, NFLI3 to up-regulate CYP2A5, BHLHE41/HNF1A axis to up-regulate CYP1A2, CYP2E1 and CYP3A11, and NR1D1 to up-regulate CYP2B10, CYP4A10 and CYP4A14. The protein is Nuclear receptor subfamily 0 group B member 2 (NR0B2) of Homo sapiens (Human).